The chain runs to 125 residues: Small ribosomal subunit protein bS6 (125 aa).

The disordered stretch occupies residues 96 to 125 (VTAPSPMMREEKAKSAPQPAEEAKETTLAT). Over residues 116 to 125 (EEAKETTLAT) the composition is skewed to basic and acidic residues.

This sequence belongs to the bacterial ribosomal protein bS6 family.

Its function is as follows. Binds together with bS18 to 16S ribosomal RNA. The sequence is that of Small ribosomal subunit protein bS6 from Nitrosospira multiformis (strain ATCC 25196 / NCIMB 11849 / C 71).